The sequence spans 279 residues: Four and a half LIM domains protein 2 (279 aa).

A C4-type zinc finger spans residues 7–31 (CHHCNESLYGKKYILKEENPHCVAC). LIM zinc-binding domains are found at residues 40 to 92 (CEEC…CTDC), 101 to 153 (CQEC…CVPC), and 162 to 212 (CVQC…CLTC). Residue lysine 78 forms a Glycyl lysine isopeptide (Lys-Gly) (interchain with G-Cter in SUMO2) linkage. Residues lysine 167 and lysine 220 each participate in a glycyl lysine isopeptide (Lys-Gly) (interchain with G-Cter in SUMO2) cross-link. Positions 221-275 (CAGCTNPISGLGGTKYISFEERQWHNDCFNCKKCSLSLVGRGFLTERDDILCPDC) constitute an LIM zinc-binding 4 domain. At serine 238 the chain carries Phosphoserine.

In terms of assembly, interacts with ZNF638 and TTN/titin. Interacts with E4F1. Interacts with GRB7. Interacts with SIRT1 and FOXO1. Interacts with CEFIP and calcineurin. Interacts with FOXK1. In terms of tissue distribution, expressed in heart only (at protein level).

It is found in the cytoplasm. It localises to the nucleus. The protein resides in the myofibril. The protein localises to the sarcomere. Its subcellular location is the z line. Functionally, may function as a molecular transmitter linking various signaling pathways to transcriptional regulation. Negatively regulates the transcriptional repressor E4F1 and may function in cell growth. Inhibits the transcriptional activity of FOXO1 and its apoptotic function by enhancing the interaction of FOXO1 with SIRT1 and FOXO1 deacetylation. Negatively regulates the calcineurin/NFAT signaling pathway in cardiomyocytes. The sequence is that of Four and a half LIM domains protein 2 (Fhl2) from Rattus norvegicus (Rat).